The primary structure comprises 404 residues: MKLPIYLDYSATTPVDPRVAQKMAECLLVDGNFGNPASRSHVFGWKAEEAVENGRRQVAELINADPREIVWTSGATESDNLALKGVAHFYQTKGKHIITSKIEHKAVLDTARQLEREGFEVTYLEPGEDGIVTPAMVEAALRDDTILVSLMHVNNEVGSINDIAAIGELTRSRGVLFHVDAAQSAGKVEIDVQKLKVDLMSFSAHKVYGPKGIGALYVSRKPRVRLEAIIHGGGHERGMRSGTLPTHQIVGMGEAFAIAKQEMAAENVRIKALSDRFFKQVSDLEELYVNGSQTARVPHNLNLSFNYVEGESLLMSLKDIAVSSGSACTSASLEPSYVLRALGRNDELAHSSIRFSFGRFTTEEEVDYAAQEVCKAVNKLRELSPLWDMYKDGVDISKIEWAAH.

Pyridoxal 5'-phosphate is bound by residues 75–76 (AT), asparagine 155, glutamine 183, and 203–205 (SAH). Lysine 206 is modified (N6-(pyridoxal phosphate)lysine). Residue threonine 243 participates in pyridoxal 5'-phosphate binding. The active-site Cysteine persulfide intermediate is the cysteine 328. Cysteine 328 lines the [2Fe-2S] cluster pocket.

It belongs to the class-V pyridoxal-phosphate-dependent aminotransferase family. NifS/IscS subfamily. In terms of assembly, homodimer. Forms a heterotetramer with IscU, interacts with other sulfur acceptors. Pyridoxal 5'-phosphate is required as a cofactor.

Its subcellular location is the cytoplasm. The enzyme catalyses (sulfur carrier)-H + L-cysteine = (sulfur carrier)-SH + L-alanine. Its pathway is cofactor biosynthesis; iron-sulfur cluster biosynthesis. Master enzyme that delivers sulfur to a number of partners involved in Fe-S cluster assembly, tRNA modification or cofactor biosynthesis. Catalyzes the removal of elemental sulfur atoms from cysteine to produce alanine. Functions as a sulfur delivery protein for Fe-S cluster synthesis onto IscU, an Fe-S scaffold assembly protein, as well as other S acceptor proteins. This is Cysteine desulfurase IscS from Pseudomonas entomophila (strain L48).